We begin with the raw amino-acid sequence, 137 residues long: Phosphoribosyl-AMP cyclohydrolase (137 aa).

Position 84 (Asp84) interacts with Mg(2+). Cys85 contacts Zn(2+). Mg(2+) is bound by residues Asp86 and Asp88. Zn(2+)-binding residues include Cys101 and Cys108.

Belongs to the PRA-CH family. Homodimer. Requires Mg(2+) as cofactor. It depends on Zn(2+) as a cofactor.

It is found in the cytoplasm. It catalyses the reaction 1-(5-phospho-beta-D-ribosyl)-5'-AMP + H2O = 1-(5-phospho-beta-D-ribosyl)-5-[(5-phospho-beta-D-ribosylamino)methylideneamino]imidazole-4-carboxamide. It functions in the pathway amino-acid biosynthesis; L-histidine biosynthesis; L-histidine from 5-phospho-alpha-D-ribose 1-diphosphate: step 3/9. Functionally, catalyzes the hydrolysis of the adenine ring of phosphoribosyl-AMP. This is Phosphoribosyl-AMP cyclohydrolase from Chlorobaculum parvum (strain DSM 263 / NCIMB 8327) (Chlorobium vibrioforme subsp. thiosulfatophilum).